Consider the following 558-residue polypeptide: Urocanate hydratase (558 aa).

NAD(+)-binding positions include 50–51, Q128, 174–176, E194, R199, 240–241, 261–265, 271–272, and Y320; these read GG, GMG, NA, QTSAH, and YI. Residue C408 is part of the active site. G490 serves as a coordination point for NAD(+).

It belongs to the urocanase family. NAD(+) serves as cofactor.

Its subcellular location is the cytoplasm. It carries out the reaction 4-imidazolone-5-propanoate = trans-urocanate + H2O. It functions in the pathway amino-acid degradation; L-histidine degradation into L-glutamate; N-formimidoyl-L-glutamate from L-histidine: step 2/3. Functionally, catalyzes the conversion of urocanate to 4-imidazolone-5-propionate. This is Urocanate hydratase from Deinococcus radiodurans (strain ATCC 13939 / DSM 20539 / JCM 16871 / CCUG 27074 / LMG 4051 / NBRC 15346 / NCIMB 9279 / VKM B-1422 / R1).